A 344-amino-acid chain; its full sequence is Protein RecA (344 aa).

66–73 (GPESSGKT) is a binding site for ATP.

The protein belongs to the RecA family.

The protein localises to the cytoplasm. Can catalyze the hydrolysis of ATP in the presence of single-stranded DNA, the ATP-dependent uptake of single-stranded DNA by duplex DNA, and the ATP-dependent hybridization of homologous single-stranded DNAs. It interacts with LexA causing its activation and leading to its autocatalytic cleavage. This is Protein RecA from Methylobacillus flagellatus (strain ATCC 51484 / DSM 6875 / VKM B-1610 / KT).